Reading from the N-terminus, the 250-residue chain is Beta-crystallin B1 (250 aa).

A compositionally biased stretch (polar residues) spans 1–13 (MSQAAKASATTAV). A disordered region spans residues 1–49 (MSQAAKASATTAVNPGPDGKGKGAPSTGPAPAPGPTPVPASVPRPAAKV). Serine 2 is modified (N-acetylserine). Residues 2 to 56 (SQAAKASATTAVNPGPDGKGKGAPSTGPAPAPGPTPVPASVPRPAAKVGDLPPGS) form an N-terminal arm region. Residues 28 to 42 (GPAPAPGPTPVPASV) show a composition bias toward pro residues. Beta/gamma crystallin 'Greek key' domains are found at residues 57-96 (YRLIVFEQENFQGRRVEFSGECLNLGDRGFDRVRSLIVVS) and 97-141 (GPWV…RPIR). Residues 142 to 146 (MDSQE) are connecting peptide. Beta/gamma crystallin 'Greek key' domains lie at 147–188 (HKIC…TVSG) and 189–231 (GTWV…RRLR). The C-terminal arm stretch occupies residues 233-250 (RQWHQEGCFPVLTAEPPK).

It belongs to the beta/gamma-crystallin family. Homo/heterodimer, or complexes of higher-order. The structure of beta-crystallin oligomers seems to be stabilized through interactions between the N-terminal arms. In terms of processing, specific cleavages in the N-terminal arm occur during lens maturation and give rise to truncated forms, leading to impaired oligomerization and protein insolubilization. The protease responsible for this partial degradation could be calpain II.

Crystallins are the dominant structural components of the vertebrate eye lens. This chain is Beta-crystallin B1 (Crybb1), found in Mus musculus (Mouse).